The primary structure comprises 235 residues: Glucosamine-6-phosphate deaminase (235 aa).

Residue Asp62 is the Proton acceptor; for enolization step of the active site. Asn128 serves as the catalytic For ring-opening step. The Proton acceptor; for ring-opening step role is filled by His130. The For ring-opening step role is filled by Glu135.

It belongs to the glucosamine/galactosamine-6-phosphate isomerase family. NagB subfamily.

It carries out the reaction alpha-D-glucosamine 6-phosphate + H2O = beta-D-fructose 6-phosphate + NH4(+). The protein operates within amino-sugar metabolism; N-acetylneuraminate degradation; D-fructose 6-phosphate from N-acetylneuraminate: step 5/5. In terms of biological role, catalyzes the reversible isomerization-deamination of glucosamine 6-phosphate (GlcN6P) to form fructose 6-phosphate (Fru6P) and ammonium ion. This is Glucosamine-6-phosphate deaminase from Lactococcus lactis subsp. lactis (strain IL1403) (Streptococcus lactis).